A 534-amino-acid polypeptide reads, in one-letter code: UDP-glucuronosyltransferase 2A3 (534 aa).

Positions 1–18 are cleaved as a signal peptide; that stretch reads MVSEKCVAAFFLLQLCWA. The Extracellular portion of the chain corresponds to 19–493; the sequence is GCGFCSKVLV…SWFQYHSLDV (475 aa). An N-linked (GlcNAc...) asparagine glycan is attached at asparagine 102. Lysine 135 bears the N6-succinyllysine mark. Residue asparagine 204 is glycosylated (N-linked (GlcNAc...) asparagine). The chain crosses the membrane as a helical span at residues 494–514; that stretch reads IGFLLLCVVTLTFIITKFCLF. Residues 515–534 are Cytoplasmic-facing; the sequence is VCQKLYMKESKKMGNRKKKN.

This sequence belongs to the UDP-glycosyltransferase family. As to expression, highly expressed in liver, with lower levels in duodenum and jejunum.

Its subcellular location is the membrane. It catalyses the reaction glucuronate acceptor + UDP-alpha-D-glucuronate = acceptor beta-D-glucuronoside + UDP + H(+). Its function is as follows. UDP-glucuronosyltransferases catalyze phase II biotransformation reactions in which lipophilic substrates are conjugated with glucuronic acid to increase water solubility and enhance excretion. They are of major importance in the conjugation and subsequent elimination of potentially toxic xenobiotics and endogenous compounds. This Mus musculus (Mouse) protein is UDP-glucuronosyltransferase 2A3 (Ugt2a3).